The sequence spans 497 residues: MORN repeat-containing protein 1 (497 aa).

The tract at residues M1–Y27 is disordered. MORN repeat units lie at residues Y39–Y61, Y62–D84, F86–C108, Y109–V131, Y132–K154, Y155–T177, and Y178–T200. Disordered stretches follow at residues G393–E425 and Q468–R497.

This is MORN repeat-containing protein 1 (MORN1) from Homo sapiens (Human).